The following is a 49-amino-acid chain: RTCQSQSHKFKGACFSDTNCDSVCRTENFPRGQCNQHHVERKCYCERDC.

4 cysteine pairs are disulfide-bonded: cysteine 3/cysteine 49, cysteine 14/cysteine 34, cysteine 20/cysteine 43, and cysteine 24/cysteine 45.

Its function is as follows. Has weak antifungal activity against F.graminearum and F.verticillioides below 30 ug/ml, but not against A.consortiale B.cinerea, H.sativum, F.culmorum, C.graminicola and D.maydis. This chain is Defensin Tk-AMP-D1, found in Triticum kiharae (Wheat).